A 157-amino-acid chain; its full sequence is 2-C-methyl-D-erythritol 2,4-cyclodiphosphate synthase (157 aa).

Residues D8 and H10 each contribute to the a divalent metal cation site. 4-CDP-2-C-methyl-D-erythritol 2-phosphate contacts are provided by residues D8–H10 and H34–S35. H42 is an a divalent metal cation binding site. Residues D56–G58, T132–E135, and R142 contribute to the 4-CDP-2-C-methyl-D-erythritol 2-phosphate site.

It belongs to the IspF family. As to quaternary structure, homotrimer. The cofactor is a divalent metal cation.

It carries out the reaction 4-CDP-2-C-methyl-D-erythritol 2-phosphate = 2-C-methyl-D-erythritol 2,4-cyclic diphosphate + CMP. Its pathway is isoprenoid biosynthesis; isopentenyl diphosphate biosynthesis via DXP pathway; isopentenyl diphosphate from 1-deoxy-D-xylulose 5-phosphate: step 4/6. Involved in the biosynthesis of isopentenyl diphosphate (IPP) and dimethylallyl diphosphate (DMAPP), two major building blocks of isoprenoid compounds. Catalyzes the conversion of 4-diphosphocytidyl-2-C-methyl-D-erythritol 2-phosphate (CDP-ME2P) to 2-C-methyl-D-erythritol 2,4-cyclodiphosphate (ME-CPP) with a corresponding release of cytidine 5-monophosphate (CMP). This chain is 2-C-methyl-D-erythritol 2,4-cyclodiphosphate synthase, found in Chlorobaculum tepidum (strain ATCC 49652 / DSM 12025 / NBRC 103806 / TLS) (Chlorobium tepidum).